Consider the following 227-residue polypeptide: GTP:AMP phosphotransferase AK3, mitochondrial (227 aa).

The GTP site is built by Gly-17, Gly-19, Lys-20, Gly-21, and Thr-22. Lys-20 carries the post-translational modification N6-succinyllysine. Lys-34 carries the post-translational modification N6-acetyllysine. Position 37 is a phosphoserine (Ser-37). An NMP region spans residues 37–66 (SSGDLLRDNMLRGTEIGVLAKAFIDQGKLI). AMP contacts are provided by Ser-38 and Arg-43. An N6-succinyllysine modification is found at Lys-57. Lys-64 is an AMP binding site. Lys-64 and Lys-80 each carry N6-acetyllysine; alternate. An N6-succinyllysine; alternate mark is found at Lys-64 and Lys-80. Gly-91, Arg-94, and Gln-98 together coordinate AMP. The interval 127–164 (ARWIHPASGRVYNIEFNPPKTVGIDDLTGEPLIQREDD) is LID. Arg-128, Tyr-138, Asn-139, Arg-161, and Arg-172 together coordinate GTP. N6-acetyllysine; alternate is present on residues Lys-174 and Lys-189. An N6-succinyllysine; alternate mark is found at Lys-174 and Lys-189. Thr-201 serves as a coordination point for GTP. Lys-203 carries the N6-acetyllysine modification.

This sequence belongs to the adenylate kinase family. AK3 subfamily. As to quaternary structure, monomer.

It localises to the mitochondrion matrix. It carries out the reaction a ribonucleoside 5'-triphosphate + AMP = a ribonucleoside 5'-diphosphate + ADP. The catalysed reaction is GTP + AMP = GDP + ADP. The enzyme catalyses ITP + AMP = IDP + ADP. Its function is as follows. Mitochondrial adenylate kinase with a specific GTP:AMP phosphotransferase activity. Could also use ITP as phosphate donor. Its physiological function is to recycle GTP into GDP which is necessary for the TCA cycle in the mitochondrial matrix. This Pongo abelii (Sumatran orangutan) protein is GTP:AMP phosphotransferase AK3, mitochondrial.